A 944-amino-acid chain; its full sequence is ATP-dependent helicase fft1 (944 aa).

2 disordered regions span residues 89–109 and 174–246; these read AAYD…ESSN and SAQK…NSIP. A compositionally biased stretch (basic and acidic residues) spans 92–108; it reads DPHDQPPERDVSLKESS. Positions 174–184 are enriched in polar residues; sequence SAQKLNNQPIE. Positions 186–203 are enriched in basic and acidic residues; that stretch reads SSVDKENAKRKRYVEEGT. The segment covering 217–227 has biased composition (acidic residues); that stretch reads LSDEETNEDDL. The segment covering 230–246 has biased composition (polar residues); the sequence is QSPTACTTDANIDNSIP. Positions 426 to 592 constitute a Helicase ATP-binding domain; the sequence is CLMYKAKLSG…ISLLAFMLPK (167 aa). 439 to 446 is an ATP binding site; it reads DEMGLGKT. The short motif at 543 to 546 is the DEGH box element; sequence DEGH. One can recognise a Helicase C-terminal domain in the interval 766 to 923; sequence KVKKLCSLLK…DSEKIQKEIS (158 aa).

This sequence belongs to the SNF2/RAD54 helicase family.

The protein localises to the nucleus. It carries out the reaction ATP + H2O = ADP + phosphate + H(+). In terms of biological role, DNA helicase that possesses intrinsic ATP-dependent nucleosome-remodeling activity and is required for heterochromatin organization. The chain is ATP-dependent helicase fft1 (fft1) from Schizosaccharomyces pombe (strain 972 / ATCC 24843) (Fission yeast).